The primary structure comprises 546 residues: Arginine--tRNA ligase (546 aa).

The 'HIGH' region signature appears at 117 to 127 (ANPTGPLHIGR).

The protein belongs to the class-I aminoacyl-tRNA synthetase family.

It localises to the cytoplasm. The enzyme catalyses tRNA(Arg) + L-arginine + ATP = L-arginyl-tRNA(Arg) + AMP + diphosphate. In Thermoplasma acidophilum (strain ATCC 25905 / DSM 1728 / JCM 9062 / NBRC 15155 / AMRC-C165), this protein is Arginine--tRNA ligase.